The chain runs to 541 residues: Chaperonin GroEL 2 (541 aa).

Residues 29–32 (TLGP), 86–90 (DGTTT), Gly-413, 476–478 (NAA), and Asp-492 contribute to the ATP site.

The protein belongs to the chaperonin (HSP60) family. As to quaternary structure, forms a cylinder of 14 subunits composed of two heptameric rings stacked back-to-back. Interacts with the co-chaperonin GroES.

It is found in the secreted. The protein localises to the capsule. It localises to the cell surface. The protein resides in the cell wall. It catalyses the reaction ATP + H2O + a folded polypeptide = ADP + phosphate + an unfolded polypeptide.. In terms of biological role, together with its co-chaperonin GroES, plays an essential role in assisting protein folding. The GroEL-GroES system forms a nano-cage that allows encapsulation of the non-native substrate proteins and provides a physical environment optimized to promote and accelerate protein folding. The protein is Chaperonin GroEL 2 of Mycobacterium avium (strain 104).